A 176-amino-acid polypeptide reads, in one-letter code: ATP-dependent protease subunit HslV (176 aa).

T2 is a catalytic residue. Residues G157, C160, and T163 each coordinate Na(+).

It belongs to the peptidase T1B family. HslV subfamily. A double ring-shaped homohexamer of HslV is capped on each side by a ring-shaped HslU homohexamer. The assembly of the HslU/HslV complex is dependent on binding of ATP.

The protein resides in the cytoplasm. It catalyses the reaction ATP-dependent cleavage of peptide bonds with broad specificity.. Allosterically activated by HslU binding. Functionally, protease subunit of a proteasome-like degradation complex believed to be a general protein degrading machinery. This is ATP-dependent protease subunit HslV from Salmonella gallinarum (strain 287/91 / NCTC 13346).